Consider the following 310-residue polypeptide: Acetyl-coenzyme A carboxylase carboxyl transferase subunit alpha (310 aa).

A CoA carboxyltransferase C-terminal domain is found at 31–285; the sequence is SFERELRIIN…KQKILRRLKQ (255 aa).

The protein belongs to the AccA family. In terms of assembly, acetyl-CoA carboxylase is a heterohexamer composed of biotin carboxyl carrier protein (accB), biotin carboxylase (accC) and two subunits each of ACCase subunit alpha (accA) and ACCase subunit beta (accD).

It is found in the plastid. It localises to the chloroplast. It carries out the reaction N(6)-carboxybiotinyl-L-lysyl-[protein] + acetyl-CoA = N(6)-biotinyl-L-lysyl-[protein] + malonyl-CoA. It participates in lipid metabolism; malonyl-CoA biosynthesis; malonyl-CoA from acetyl-CoA: step 1/1. In terms of biological role, component of the acetyl coenzyme A carboxylase (ACC) complex. First, biotin carboxylase catalyzes the carboxylation of biotin on its carrier protein (BCCP) and then the CO(2) group is transferred by the carboxyltransferase to acetyl-CoA to form malonyl-CoA. The polypeptide is Acetyl-coenzyme A carboxylase carboxyl transferase subunit alpha (Cyanidioschyzon merolae (strain NIES-3377 / 10D) (Unicellular red alga)).